The sequence spans 1190 residues: Tight junction protein 2 (1190 aa).

Phosphoserine is present on S16. In terms of domain architecture, PDZ 1 spans 33 to 120 (TVTLQKDSKR…VAAIVVKRPR (88 aa)). 20 positions are modified to phosphoserine: S130, S150, S153, S163, S168, S170, S174, S200, S220, S232, S244, S266, S325, S398, S400, S406, S415, S424, S430, and S431. Residues 152-306 (RSGYSERSRL…PEPRGRPGPI (155 aa)) form a disordered region. Residues 169–291 (RSWEDSPERG…PRSRSREHPH (123 aa)) show a composition bias toward basic and acidic residues. The PDZ 2 domain occupies 307 to 385 (GVLLMKSRAN…KLQLVVLRDS (79 aa)). The tract at residues 408–506 (IESNRSFSPE…RPSPEDEAIY (99 aa)) is disordered. Positions 415–446 (SPEERRHQYSDYDYHSSSEKLKERPSSREDTP) are enriched in basic and acidic residues. T455 is modified (phosphothreonine). S499 is subject to Phosphoserine. The 82-residue stretch at 509-590 (NTKMVRFKKG…GEMVTILAQS (82 aa)) folds into the PDZ 3 domain. Residue Y574 is modified to Phosphotyrosine. The SH3 domain occupies 604-669 (GDSFFIRSHF…PNKSRAEQMA (66 aa)). The region spanning 678–876 (NAGDRADFWR…WFGSLKDTIQ (199 aa)) is the Guanylate kinase-like domain. Phosphoserine occurs at positions 702 and 902. The residue at position 905 (T905) is a Phosphothreonine. Phosphoserine occurs at positions 913 and 920. 2 disordered regions span residues 920–1079 (SDFE…KSVL) and 1105–1190 (NARI…DTEL). Phosphothreonine is present on residues T925 and T933. Residues 956–967 (VQHEESIRKPSP) show a composition bias toward basic and acidic residues. A phosphoserine mark is found at S966, S978, S986, S1006, S1067, and S1068. Over residues 994 to 1014 (EPPKAKTQNKEESYDFSKSYE) the composition is skewed to basic and acidic residues. Residues 1060–1072 (EGEEVGESSEEQD) show a composition bias toward acidic residues. At Y1118 the chain carries Phosphotyrosine. A Phosphothreonine modification is found at T1131. A phosphoserine mark is found at S1147 and S1159. A compositionally biased stretch (basic and acidic residues) spans 1166-1175 (YRQQLSEHSK). Residues 1188-1190 (TEL) form an interaction with SCRIB region.

This sequence belongs to the MAGUK family. In terms of assembly, homodimer. Interacts (via PDZ2 domain) with TJP1/ZO1 (via PDZ2 domain). Interacts with OCLN. Interacts with UBN1. Interacts with SAFB in the nucleus. Interacts with SCRIB. Interacts with USP53 (via the C-terminal region). Interacts with claudins, including CLDN1, CLDN2, CLDN3, CLDN5 and CLDN7. Interacts with CLDN18. Interacts (via N-terminus) with CTNNA1. In terms of tissue distribution, this protein is found in epithelial cell junctions. Isoform A1 is abundant in the heart and brain. Detected in brain and skeletal muscle. It is present almost exclusively in normal tissues. Isoform C1 is expressed at high level in the kidney, pancreas, heart and placenta. Not detected in brain and skeletal muscle. Found in normal as well as in most neoplastic tissues.

The protein localises to the cell junction. The protein resides in the adherens junction. It is found in the cell membrane. Its subcellular location is the tight junction. It localises to the nucleus. Plays a role in tight junctions and adherens junctions. Acts as a positive regulator of RANKL-induced osteoclast differentiation, potentially via mediating downstream transcriptional activity. The protein is Tight junction protein 2 of Homo sapiens (Human).